Reading from the N-terminus, the 132-residue chain is Small ribosomal subunit protein uS8 (132 aa).

Belongs to the universal ribosomal protein uS8 family. In terms of assembly, part of the 30S ribosomal subunit. Contacts proteins S5 and S12.

One of the primary rRNA binding proteins, it binds directly to 16S rRNA central domain where it helps coordinate assembly of the platform of the 30S subunit. In Streptococcus mutans serotype c (strain ATCC 700610 / UA159), this protein is Small ribosomal subunit protein uS8.